A 619-amino-acid chain; its full sequence is Sorting nexin-41 (619 aa).

The tract at residues 1-95 (MWNDEDNNPY…ELVPRRKPGG (95 aa)) is disordered. One can recognise a PX domain in the interval 108–224 (PELPILITEA…WRFLDPNSSW (117 aa)). 4 residues coordinate a 1,2-diacyl-sn-glycero-3-phospho-(1D-myo-inositol-3-phosphate): Arg142, Ser144, Lys168, and Arg191. Residues 444-510 (YLSSSQQIQP…GSPSHKKAAS (67 aa)) form a disordered region. Basic and acidic residues predominate over residues 454–467 (PRREPPAQHRRDGS).

It belongs to the sorting nexin family.

It is found in the endosome membrane. The protein localises to the endomembrane system. In terms of biological role, may be required for cytoplasm to vacuole transport (Cvt) and pexophagy. This chain is Sorting nexin-41 (vsp-6), found in Neurospora crassa (strain ATCC 24698 / 74-OR23-1A / CBS 708.71 / DSM 1257 / FGSC 987).